The sequence spans 309 residues: Porphobilinogen deaminase (309 aa).

Cysteine 241 carries the S-(dipyrrolylmethanemethyl)cysteine modification.

It belongs to the HMBS family. As to quaternary structure, monomer. Dipyrromethane is required as a cofactor.

It carries out the reaction 4 porphobilinogen + H2O = hydroxymethylbilane + 4 NH4(+). It functions in the pathway porphyrin-containing compound metabolism; protoporphyrin-IX biosynthesis; coproporphyrinogen-III from 5-aminolevulinate: step 2/4. Functionally, tetrapolymerization of the monopyrrole PBG into the hydroxymethylbilane pre-uroporphyrinogen in several discrete steps. The polypeptide is Porphobilinogen deaminase (Bacillus cereus (strain ATCC 10987 / NRS 248)).